The primary structure comprises 522 residues: Thiamine biosynthetic bifunctional enzyme TH1, chloroplastic (522 aa).

A chloroplast-targeting transit peptide spans 1–36 (MNSLGGIRSWPANWRSTTASMTTTESVRKVPQVLTV). 4-amino-2-methyl-5-(diphosphooxymethyl)pyrimidine-binding positions include 345-349 (QLREK) and asparagine 377. Mg(2+)-binding residues include aspartate 378 and aspartate 397. Serine 416 contacts 4-amino-2-methyl-5-(diphosphooxymethyl)pyrimidine. Residue 442–444 (TNT) coordinates 2-[(2R,5Z)-2-carboxy-4-methylthiazol-5(2H)-ylidene]ethyl phosphate. 4-amino-2-methyl-5-(diphosphooxymethyl)pyrimidine is bound at residue lysine 445. 2-[(2R,5Z)-2-carboxy-4-methylthiazol-5(2H)-ylidene]ethyl phosphate-binding positions include glycine 472 and 495–496 (VS).

This sequence belongs to the thiamine-phosphate synthase family. Mg(2+) is required as a cofactor.

The protein resides in the plastid. Its subcellular location is the chloroplast. The catalysed reaction is 2-[(2R,5Z)-2-carboxy-4-methylthiazol-5(2H)-ylidene]ethyl phosphate + 4-amino-2-methyl-5-(diphosphooxymethyl)pyrimidine + 2 H(+) = thiamine phosphate + CO2 + diphosphate. The enzyme catalyses 2-(2-carboxy-4-methylthiazol-5-yl)ethyl phosphate + 4-amino-2-methyl-5-(diphosphooxymethyl)pyrimidine + 2 H(+) = thiamine phosphate + CO2 + diphosphate. It catalyses the reaction 4-methyl-5-(2-phosphooxyethyl)-thiazole + 4-amino-2-methyl-5-(diphosphooxymethyl)pyrimidine + H(+) = thiamine phosphate + diphosphate. It carries out the reaction 4-amino-5-hydroxymethyl-2-methylpyrimidine + ATP = 4-amino-2-methyl-5-(phosphooxymethyl)pyrimidine + ADP + H(+). Its pathway is cofactor biosynthesis; thiamine diphosphate biosynthesis; thiamine phosphate from 4-amino-2-methyl-5-diphosphomethylpyrimidine and 4-methyl-5-(2-phosphoethyl)-thiazole: step 1/1. The protein operates within cofactor biosynthesis; thiamine diphosphate biosynthesis; 4-amino-2-methyl-5-diphosphomethylpyrimidine from 5-amino-1-(5-phospho-D-ribosyl)imidazole: step 2/3. Essential for thiamine biosynthesis. Bifunctional enzyme that catalyzes the phosphorylation of hydroxymethylpyrimidine phosphate (HMP-P) to HMP-PP and condenses 4-methyl-5-(beta-hydroxyethyl)thiazole monophosphate (THZ-P) and 2-methyl-4-amino-5-hydroxymethyl pyrimidine pyrophosphate (HMP-PP) to form thiamine monophosphate (TMP). This is Thiamine biosynthetic bifunctional enzyme TH1, chloroplastic (TH1) from Arabidopsis thaliana (Mouse-ear cress).